The sequence spans 279 residues: 5'-nucleotidase SurE 1 (279 aa).

Residues Asp12, Asp13, Ser45, and Asn103 each coordinate a divalent metal cation.

This sequence belongs to the SurE nucleotidase family. A divalent metal cation serves as cofactor.

Its subcellular location is the cytoplasm. The enzyme catalyses a ribonucleoside 5'-phosphate + H2O = a ribonucleoside + phosphate. Its function is as follows. Nucleotidase that shows phosphatase activity on nucleoside 5'-monophosphates. This chain is 5'-nucleotidase SurE 1, found in Chlamydia caviae (strain ATCC VR-813 / DSM 19441 / 03DC25 / GPIC) (Chlamydophila caviae).